A 349-amino-acid polypeptide reads, in one-letter code: Dihydroorotate dehydrogenase (quinone) (349 aa).

Residues 67–71 (AGLDK) and Thr91 contribute to the FMN site. Lys71 is a substrate binding site. 116–120 (NRLGF) contributes to the substrate binding site. Asn147 and Asn180 together coordinate FMN. Asn180 provides a ligand contact to substrate. Ser183 (nucleophile) is an active-site residue. Asn185 is a binding site for substrate. Residues Lys225 and Thr253 each contribute to the FMN site. A substrate-binding site is contributed by 254–255 (NT). Residues Gly276, Gly305, and 326-327 (YT) each bind FMN.

This sequence belongs to the dihydroorotate dehydrogenase family. Type 2 subfamily. In terms of assembly, monomer. Requires FMN as cofactor.

It is found in the cell membrane. It catalyses the reaction (S)-dihydroorotate + a quinone = orotate + a quinol. It participates in pyrimidine metabolism; UMP biosynthesis via de novo pathway; orotate from (S)-dihydroorotate (quinone route): step 1/1. Functionally, catalyzes the conversion of dihydroorotate to orotate with quinone as electron acceptor. This is Dihydroorotate dehydrogenase (quinone) from Bordetella parapertussis (strain 12822 / ATCC BAA-587 / NCTC 13253).